We begin with the raw amino-acid sequence, 559 residues long: Serine/threonine-protein kinase VRK1 (559 aa).

Residues 32–388 (YIVGKQFATG…EDDDEEEEVI (357 aa)) enclose the Protein kinase domain. Residues 38–46 (FATGGFGRI) and Lys61 contribute to the ATP site. The active-site Proton acceptor is Asp167. Disordered regions lie at residues 315–419 (EAAQ…ATSD) and 448–559 (SSCE…SSEV). 2 stretches are compositionally biased toward polar residues: residues 405 to 418 (RSFN…TATS) and 449 to 460 (SCESQYESNEPG). The span at 533-542 (TSARYQEKRA) shows a compositional bias: basic and acidic residues. The segment covering 545–559 (NTKPTFDDSSCSSEV) has biased composition (polar residues).

This sequence belongs to the protein kinase superfamily. CK1 Ser/Thr protein kinase family. VRK subfamily. Autophosphorylates in vitro.

Its subcellular location is the nucleus. The protein localises to the cytoplasm. It localises to the cajal body. The enzyme catalyses L-seryl-[protein] + ATP = O-phospho-L-seryl-[protein] + ADP + H(+). It catalyses the reaction L-threonyl-[protein] + ATP = O-phospho-L-threonyl-[protein] + ADP + H(+). Serine/threonine kinase that phosphorylates baf-1, thus regulating the association of baf-1 with chromatin and nuclear membrane proteins during nuclear envelope formation. May act through the egl-17 signaling pathway. Essential in hermaphrodites for formation of the vulva, uterus, and uterine seam cells and for development and maintenance of the somatic gonad and thus the germ line. Acts to prevent cep-1 from triggering an inappropriate cell cycle arrest, thereby promoting germ cell proliferation. Regulates anchor cell polarity and the timing of anchor cell invasion through the basement membranes separating vulval and somatic gonadal cells during the L3 larval stage. The sequence is that of Serine/threonine-protein kinase VRK1 from Caenorhabditis briggsae.